Consider the following 153-residue polypeptide: Prefoldin subunit alpha (153 aa).

Positions 126 to 153 are disordered; that stretch reads KRLEQGYRQAPGGSPVPHRHDHEDHDEE. Over residues 143-153 the composition is skewed to basic and acidic residues; sequence HRHDHEDHDEE.

Belongs to the prefoldin alpha subunit family. In terms of assembly, heterohexamer of two alpha and four beta subunits.

It is found in the cytoplasm. Its function is as follows. Molecular chaperone capable of stabilizing a range of proteins. Seems to fulfill an ATP-independent, HSP70-like function in archaeal de novo protein folding. The chain is Prefoldin subunit alpha from Methanoregula boonei (strain DSM 21154 / JCM 14090 / 6A8).